Reading from the N-terminus, the 101-residue chain is ATP-dependent Clp protease adapter protein ClpS 2 (101 aa).

Belongs to the ClpS family. As to quaternary structure, binds to the N-terminal domain of the chaperone ClpA.

Involved in the modulation of the specificity of the ClpAP-mediated ATP-dependent protein degradation. This Rhizobium meliloti (strain 1021) (Ensifer meliloti) protein is ATP-dependent Clp protease adapter protein ClpS 2.